The following is a 208-amino-acid chain: Holliday junction branch migration complex subunit RuvA (208 aa).

Residues Met1–Leu63 are domain I. Positions Asp64 to Gln142 are domain II. Residues Ala143–Asp151 are flexible linker. The domain III stretch occupies residues Asp151–Arg208.

It belongs to the RuvA family. As to quaternary structure, homotetramer. Forms an RuvA(8)-RuvB(12)-Holliday junction (HJ) complex. HJ DNA is sandwiched between 2 RuvA tetramers; dsDNA enters through RuvA and exits via RuvB. An RuvB hexamer assembles on each DNA strand where it exits the tetramer. Each RuvB hexamer is contacted by two RuvA subunits (via domain III) on 2 adjacent RuvB subunits; this complex drives branch migration. In the full resolvosome a probable DNA-RuvA(4)-RuvB(12)-RuvC(2) complex forms which resolves the HJ.

It is found in the cytoplasm. The RuvA-RuvB-RuvC complex processes Holliday junction (HJ) DNA during genetic recombination and DNA repair, while the RuvA-RuvB complex plays an important role in the rescue of blocked DNA replication forks via replication fork reversal (RFR). RuvA specifically binds to HJ cruciform DNA, conferring on it an open structure. The RuvB hexamer acts as an ATP-dependent pump, pulling dsDNA into and through the RuvAB complex. HJ branch migration allows RuvC to scan DNA until it finds its consensus sequence, where it cleaves and resolves the cruciform DNA. This Bifidobacterium longum (strain DJO10A) protein is Holliday junction branch migration complex subunit RuvA.